Reading from the N-terminus, the 251-residue chain is UstYa family oxidase phomYb (251 aa).

The tract at residues methionine 1–proline 47 is disordered. Residues alanine 58–valine 78 form a helical membrane-spanning segment. Asparagine 135 is a glycosylation site (N-linked (GlcNAc...) asparagine). 2 consecutive short sequence motifs (HXXHC) follow at residues histidine 160–cysteine 164 and histidine 187–cysteine 191.

The protein belongs to the ustYa family.

The protein resides in the membrane. It participates in mycotoxin biosynthesis. UstYa family oxidase; part of the gene cluster that mediates the biosynthesis of the phomopsins, a group of hexapeptide mycotoxins which infects lupins and causes lupinosis disease in livestock. Within the pathway, phomYb is probably involved in the construction of the macrocyclic structure of the phomopsins. The pathway starts with the processing of the precursor phomA by several endopeptidases including kexin proteases as well as the cluster-specific S41 family peptidase phomP1 and the oligopeptidase phomG to produce 10 identical copies of the hexapeptide Tyr-Val-Ile-Pro-Ile-Asp. After being excised from the precursor peptide, the core peptides are cyclized and modified post-translationally by enzymes encoded within the gene cluster. The timing and order of proteolysis of the phomA precursor and PTMs are still unknown. Two tyrosinase-like enzymes, phomQ1 and phomQ2, catalyze the chlorination and hydroxylation of Tyr, respectively. PhomYb, is proposed to be involved in the construction of the macrocyclic structure. The other 4 ustYa family proteins may be involved in PTMs that generate the unique structure of phomopsin A. PhomYa is required for the hydroxylation of C-beta of Tyr. PhomYc, phomYd, and phomYe are responsible for the biosynthesis of 2,3-dehydroisoleucine (dIle), 2,3-dehydroaspartic acid (dAsp), and 3,4-dehydroproline (dPro), respectively. While dIle formation by phomYc is indispensable for the installation of dAsp by phomYd, the order of the other PTMs have not been elucidated yet. Most of the biosynthetic enzymes likely have broad substrate specificity, and thus, there might be a metabolic grid from a precursor to phomopsin A. The enzyme(s) responsible for the biosynthesis of 3,4-dehydrovaline (dVal) have also not been identified yet. Finally, phomM acts as an S-adenosylmethionine-dependent alpha-N-methyltransferase that catalyzes two successive N-methylation reactions, converting N-desmethyl-phomopsin A to phomopsin A and phomopsin A further to an N,N-dimethylated congener called phomopsin E. The chain is UstYa family oxidase phomYb from Diaporthe leptostromiformis (Lupinosis disease fungus).